A 137-amino-acid polypeptide reads, in one-letter code: MSKVAQQLKFLNKISATTRLPQILVDPKKYSGLRLTFQTKNHNGHMGARVFWHNYLPTLQFYNPRMKFDVIRIKNEDKQKSVPCKLEILSHEGSVVETIDMRNKMHEDIMKDLLDKIEHVPLPENEIIRVGPQESII.

Belongs to the mitochondrion-specific ribosomal protein mL61 family. In terms of assembly, component of the mitochondrial large ribosomal subunit (mt-LSU). Mature yeast 74S mitochondrial ribosomes consist of a small (37S) and a large (54S) subunit. The 37S small subunit contains a 15S ribosomal RNA (15S mt-rRNA) and 34 different proteins. The 54S large subunit contains a 21S rRNA (21S mt-rRNA) and 46 different proteins.

The protein resides in the mitochondrion. Its function is as follows. Component of the mitochondrial ribosome (mitoribosome), a dedicated translation machinery responsible for the synthesis of mitochondrial genome-encoded proteins, including at least some of the essential transmembrane subunits of the mitochondrial respiratory chain. The mitoribosomes are attached to the mitochondrial inner membrane and translation products are cotranslationally integrated into the membrane. mL61 is not essential in cells grown at 30 degrees Celsius but is required for mitochondrial translation in cells grown at 18 degrees Celsius. This chain is Large ribosomal subunit protein mL61 (MRP49), found in Saccharomyces cerevisiae (strain ATCC 204508 / S288c) (Baker's yeast).